The sequence spans 576 residues: Arginine--tRNA ligase (576 aa).

Residues 122–132 (PNVAKEMHVGH) carry the 'HIGH' region motif.

This sequence belongs to the class-I aminoacyl-tRNA synthetase family. As to quaternary structure, monomer.

It localises to the cytoplasm. It catalyses the reaction tRNA(Arg) + L-arginine + ATP = L-arginyl-tRNA(Arg) + AMP + diphosphate. The protein is Arginine--tRNA ligase of Pectobacterium atrosepticum (strain SCRI 1043 / ATCC BAA-672) (Erwinia carotovora subsp. atroseptica).